The primary structure comprises 343 residues: MPISCKSRCGNRAALKRPKTGDALCKECFFAAFEAEIHHTISSSNLFRRGEKVAVAASGGKDSTVLAHVLKLLNERHDYGLDLVLLSIDEGITGYRDDSLETVKQNRDDYQMPLKILSYEELYGWTMDRIVAQIGRSNNCTFCGVFRRQALDRGAKLLGVDSIATGHNADDIAETVLMNILRGDTARLRRCTDIKTGGGEDSIPRVKPLKYSYEKEIVMYAHYKKLVYFSTECVFAPNAYRGHARAFLKDLEKVRPSVIMDIIYSGEQLRFKDTVKKPVRGICTRCGFVSSQQPCKACVLLEGLNRGLPKLGIGKKSKGDRMIAKQNQELALRERANLVKNDF.

Belongs to the TtcA family. CTU1/NCS6/ATPBD3 subfamily.

It is found in the cytoplasm. It functions in the pathway tRNA modification; 5-methoxycarbonylmethyl-2-thiouridine-tRNA biosynthesis. Plays a central role in 2-thiolation of mcm(5)S(2)U at tRNA wobble positions of tRNA(Lys), tRNA(Glu) and tRNA(Gln). Directly binds tRNAs and probably acts by catalyzing adenylation of tRNAs, an intermediate required for 2-thiolation. It is unclear whether it acts as a sulfurtransferase that transfers sulfur from thiocarboxylated URM1 onto the uridine of tRNAs at wobble position. The sequence is that of Cytoplasmic tRNA 2-thiolation protein 1 from Drosophila ananassae (Fruit fly).